We begin with the raw amino-acid sequence, 772 residues long: MAEMADKAKVEEMDWEGIDGVRMTWNLWPRTKVEASKCVIPLAASISPIRRHPLILDLPYAPLDCKTCKALLNAFARVDFAAMNWVCPFCYHRNHFPSHYHSISEINLPGELYPQYTTVEYTLPPDPSRVPPPPVFVFVLDTCMIEEELGYAKSALKQAIGLLPENALVGFVSFGTQAHVHELGFSEMSKVFVFKGNKEVTKDQILDQLGLGSSSRRAPTSGFSKGAQNGFQSSGVDRFLLPASECEYTLDLLLDELQSDQWPVQPGHRPQRCTGVALSVAAGLLGACLPGTGARIVALVGGPCTEGPGTIISKDLSDPVRSHKDLDKDAAPYYKKAVKFYDSIAKQLVAQGHVLDLFASALDQVGVAEMKVAVESTGGLVVLSESFGHSVFKDSFKRMFEDGEHSLGLCFNGTLEINCSKDIKIQGVIGPCSSLEKKGPNVADTVIGEGNTSAWKLCGLDKSTCLTVFFDLSSTGSTAPGALNQQLYLQFITRYQNSEGKSLARVTTLTRQWVDTAVSTENLVQGFDQETAAVVMARLTSLKMETEEGFDATRWLDRTLIRLCSKFGEYRKDDPTSFTLKPYLTLFPQFMFNLRRSQFVQVFNNSPDETAYFRMLLNRENISNAIVMIQPSLTSYSFNSGPQAALLDVASIAADKILLLDAYFSVVVFHGMTISQWRNMGYHHQPEHEAFAQLLQAPQEDSQMLVRERFPVPRLVVCDQHGSQARFLLAKLNPSATYNNANEMSAGSDIIFTDDVSLQVFIEHLQKLAVQS.

Positions 65, 68, 87, and 90 each coordinate Zn(2+). Residues 65 to 90 (CKTCKALLNAFARVDFAAMNWVCPFC) are zinc finger-like.

This sequence belongs to the SEC23/SEC24 family. SEC23 subfamily. In terms of assembly, component of the coat protein complex II (COPII), composed of at least five proteins: the Sec23/24 complex, the Sec13/31 complex and Sar1. Interacts with SEC24A.

The protein localises to the cytoplasmic vesicle. It localises to the COPII-coated vesicle membrane. Its subcellular location is the endoplasmic reticulum membrane. It is found in the membrane. Functionally, component of the coat protein complex II (COPII) which promotes the formation of transport vesicles from the endoplasmic reticulum (ER). The coat has two main functions, the physical deformation of the endoplasmic reticulum membrane into vesicles and the selection of cargo molecules. This chain is Protein transport protein SEC23 F, found in Arabidopsis thaliana (Mouse-ear cress).